Consider the following 435-residue polypeptide: E3 ubiquitin-protein ligase itt1 (435 aa).

Residues 16–135 form the RWD domain; sequence DELIALQSIY…EHVRSIATIA (120 aa). The tract at residues 170-420 is TRIAD supradomain; it reads RKFQCNVCFD…DPVSSCYGML (251 aa). Positions 174, 177, 192, 194, 197, 200, 219, 224, 266, 271, 286, 289, 294, 297, 302, 308, 368, and 371 each coordinate Zn(2+). The RING-type 1 zinc-finger motif lies at 174–224; that stretch reads CNVCFDEFNGTDCFQLTRCGHVSCQSCLRDYYTMCIQEGMFSQIKCIDLDC. The IBR-type zinc-finger motif lies at 245-308; that stretch reads TNRYKELEEK…ATWHGDLSPC (64 aa). The RING-type 2; atypical zinc-finger motif lies at 368-396; it reads CPTCDRVVERIDGCCHMNCLCGTHFCFLC. Cys-381 is a catalytic residue. Cys-386, Cys-388, Cys-393, Cys-396, His-408, and Cys-416 together coordinate Zn(2+).

Belongs to the RBR family. RNF14 subfamily.

Its subcellular location is the cytoplasm. The protein localises to the nucleus. It carries out the reaction [E2 ubiquitin-conjugating enzyme]-S-ubiquitinyl-L-cysteine + [acceptor protein]-L-lysine = [E2 ubiquitin-conjugating enzyme]-L-cysteine + [acceptor protein]-N(6)-ubiquitinyl-L-lysine.. It participates in protein modification; protein ubiquitination. Its function is as follows. E3 ubiquitin-protein ligase involved in the rescue of stalled ribosomes by promoting ubiquitination and degradation of proteins on stalled ribosomes. Specifically required to resolve RNA-protein cross-links caused by reactive aldehydes, which trigger translation stress by stalling ribosomes: acts by catalying 'Lys-6'-linked ubiquitination of RNA-protein cross-links, leading to their degradation. This is E3 ubiquitin-protein ligase itt1 (itt1) from Schizosaccharomyces pombe (strain 972 / ATCC 24843) (Fission yeast).